A 231-amino-acid chain; its full sequence is 5'-methylthioadenosine/S-adenosylhomocysteine nucleosidase (231 aa).

The active-site Proton acceptor is Glu-12. Residues Gly-78, Met-153, and 174 to 175 (ME) each bind substrate. Asp-198 serves as the catalytic Proton donor.

Belongs to the PNP/UDP phosphorylase family. MtnN subfamily.

The enzyme catalyses S-adenosyl-L-homocysteine + H2O = S-(5-deoxy-D-ribos-5-yl)-L-homocysteine + adenine. It catalyses the reaction S-methyl-5'-thioadenosine + H2O = 5-(methylsulfanyl)-D-ribose + adenine. It carries out the reaction 5'-deoxyadenosine + H2O = 5-deoxy-D-ribose + adenine. It participates in amino-acid biosynthesis; L-methionine biosynthesis via salvage pathway; S-methyl-5-thio-alpha-D-ribose 1-phosphate from S-methyl-5'-thioadenosine (hydrolase route): step 1/2. Functionally, catalyzes the irreversible cleavage of the glycosidic bond in both 5'-methylthioadenosine (MTA) and S-adenosylhomocysteine (SAH/AdoHcy) to adenine and the corresponding thioribose, 5'-methylthioribose and S-ribosylhomocysteine, respectively. Also cleaves 5'-deoxyadenosine, a toxic by-product of radical S-adenosylmethionine (SAM) enzymes, into 5-deoxyribose and adenine. The protein is 5'-methylthioadenosine/S-adenosylhomocysteine nucleosidase of Bacillus cereus (strain B4264).